Reading from the N-terminus, the 37-residue chain is Large ribosomal subunit protein bL36c (37 aa).

Belongs to the bacterial ribosomal protein bL36 family.

It localises to the plastid. This chain is Large ribosomal subunit protein bL36c (rpl36), found in Euglena longa (Euglenophycean alga).